The following is a 737-amino-acid chain: Protein-glucosylgalactosylhydroxylysine glucosidase (737 aa).

Residue 300–301 participates in substrate binding; it reads WD. Residue E430 is the Proton donor of the active site. 498-499 contributes to the substrate binding site; sequence KQ. Positions 681 to 737 are disordered; sequence RSAGRIQMSPPKLPGSSSSEFPGRTFSDVRDPLQSPLWVTLGSSSPTESLTVDPASE. Polar residues predominate over residues 721–730; that stretch reads LGSSSPTESL.

It belongs to the glycosyl hydrolase 65 family.

It catalyses the reaction (5R)-5-O-[alpha-D-glucosyl-(1-&gt;2)-beta-D-galactosyl]-5-hydroxy-L-lysyl-[collagen] + H2O = (5R)-5-O-(beta-D-galactosyl)-5-hydroxy-L-lysyl-[collagen] + D-glucose. Its function is as follows. Catalyzes the hydrolysis of glucose from the disaccharide unit linked to hydroxylysine residues of collagen and collagen-like proteins. This chain is Protein-glucosylgalactosylhydroxylysine glucosidase, found in Homo sapiens (Human).